Here is a 257-residue protein sequence, read N- to C-terminus: Synaptosomal-associated protein 29 (257 aa).

Residues 1-42 (MSGYPKSYNPFDDDVEDEDTRPAPWKDARDLPDGPDPPIDRQ) are disordered. Positions 20-32 (TRPAPWKDARDLP) are enriched in basic and acidic residues. Phosphoserine occurs at positions 77, 78, 114, 163, 181, 203, and 209. The t-SNARE coiled-coil homology domain maps to 195–257 (RAYHQKIDSN…KSTEKKVRQL (63 aa)).

The protein belongs to the SNAP-25 family. Forms a SNARE complex, composed of VAMP8, SNAP29 and STX17, involved in fusion of autophagosome with lysosome. Interacts with multiple syntaxins including STX6. Interacts with EIPR1. Interacts with STX17; this interaction is increased in the absence of TMEM39A. As to expression, widely expressed.

It is found in the cytoplasm. The protein localises to the golgi apparatus membrane. It localises to the cytoplasmic vesicle. The protein resides in the autophagosome membrane. Its subcellular location is the cell projection. It is found in the cilium membrane. SNAREs, soluble N-ethylmaleimide-sensitive factor-attachment protein receptors, are essential proteins for fusion of cellular membranes. SNAREs localized on opposing membranes assemble to form a trans-SNARE complex, an extended, parallel four alpha-helical bundle that drives membrane fusion. SNAP29 is a SNARE involved in autophagy through the direct control of autophagosome membrane fusion with the lysososome membrane. Also plays a role in ciliogenesis by regulating membrane fusions. The protein is Synaptosomal-associated protein 29 of Rattus norvegicus (Rat).